Here is a 129-residue protein sequence, read N- to C-terminus: Protein LLP homolog (129 aa).

Over residues 1–21 (MAKSLRSKWKRKMRAEKRKKN) the composition is skewed to basic residues. Residues 1–27 (MAKSLRSKWKRKMRAEKRKKNAPKEAS) are disordered. Glycyl lysine isopeptide (Lys-Gly) (interchain with G-Cter in SUMO2) cross-links involve residues K67 and K74. The segment covering 100-122 (RQRKRLKAKREKRKGKSKAKAVK) has biased composition (basic residues). A disordered region spans residues 100–129 (RQRKRLKAKREKRKGKSKAKAVKVAKGLAW).

This sequence belongs to the learning-associated protein family. As to quaternary structure, interacts with CTCF, MYO1C and with the transcriptional machinery, including RNA polymerase II and TBP.

The protein resides in the nucleus. The protein localises to the nucleolus. It localises to the chromosome. Its function is as follows. In hippocampal neurons, regulates dendritic and spine growth and synaptic transmission. In Homo sapiens (Human), this protein is Protein LLP homolog (LLPH).